The chain runs to 447 residues: Exodeoxyribonuclease 7 large subunit (447 aa).

The protein belongs to the XseA family. As to quaternary structure, heterooligomer composed of large and small subunits.

Its subcellular location is the cytoplasm. It carries out the reaction Exonucleolytic cleavage in either 5'- to 3'- or 3'- to 5'-direction to yield nucleoside 5'-phosphates.. In terms of biological role, bidirectionally degrades single-stranded DNA into large acid-insoluble oligonucleotides, which are then degraded further into small acid-soluble oligonucleotides. The sequence is that of Exodeoxyribonuclease 7 large subunit from Lactobacillus helveticus (strain DPC 4571).